An 88-amino-acid polypeptide reads, in one-letter code: HssA/B-like protein 6 (88 aa).

The tract at residues 1–22 is disordered; sequence MSILSALTSISNPMKSSNSNVA.

This sequence belongs to the hssA/B family.

The sequence is that of HssA/B-like protein 6 (hssl6) from Dictyostelium discoideum (Social amoeba).